Reading from the N-terminus, the 131-residue chain is Holo-[acyl-carrier-protein] synthase (131 aa).

Residues aspartate 6 and glutamate 55 each contribute to the Mg(2+) site.

The protein belongs to the P-Pant transferase superfamily. AcpS family. Requires Mg(2+) as cofactor.

Its subcellular location is the cytoplasm. It carries out the reaction apo-[ACP] + CoA = holo-[ACP] + adenosine 3',5'-bisphosphate + H(+). Functionally, transfers the 4'-phosphopantetheine moiety from coenzyme A to a Ser of acyl-carrier-protein. The polypeptide is Holo-[acyl-carrier-protein] synthase (Verminephrobacter eiseniae (strain EF01-2)).